Consider the following 290-residue polypeptide: HTH-type transcriptional regulator BudR (290 aa).

One can recognise an HTH lysR-type domain in the interval 1–58; that stretch reads MELRYLRYFVAVAEARNFTRAAHDLGISQPPLSQQIQRLEREIGTPLLRRLTRGVELT. The segment at residues 18–37 is a DNA-binding region (H-T-H motif); that stretch reads FTRAAHDLGISQPPLSQQIQ.

It belongs to the LysR transcriptional regulatory family.

Regulator of the budABC operon for 2,3-butanediol synthesis. The protein is HTH-type transcriptional regulator BudR (budR) of Raoultella terrigena (Klebsiella terrigena).